Consider the following 159-residue polypeptide: NADH-quinone oxidoreductase subunit B (159 aa).

[4Fe-4S] cluster is bound by residues C32, C33, C97, and C126.

This sequence belongs to the complex I 20 kDa subunit family. In terms of assembly, NDH-1 is composed of 14 different subunits. Subunits NuoB, C, D, E, F, and G constitute the peripheral sector of the complex. The cofactor is [4Fe-4S] cluster.

The protein localises to the cell inner membrane. The catalysed reaction is a quinone + NADH + 5 H(+)(in) = a quinol + NAD(+) + 4 H(+)(out). In terms of biological role, NDH-1 shuttles electrons from NADH, via FMN and iron-sulfur (Fe-S) centers, to quinones in the respiratory chain. The immediate electron acceptor for the enzyme in this species is believed to be ubiquinone. Couples the redox reaction to proton translocation (for every two electrons transferred, four hydrogen ions are translocated across the cytoplasmic membrane), and thus conserves the redox energy in a proton gradient. The sequence is that of NADH-quinone oxidoreductase subunit B from Helicobacter acinonychis (strain Sheeba).